We begin with the raw amino-acid sequence, 597 residues long: DNA ligase (597 aa).

E262 provides a ligand contact to ATP. Catalysis depends on K264, which acts as the N6-AMP-lysine intermediate. Positions 269, 284, 314, 354, 431, and 437 each coordinate ATP.

This sequence belongs to the ATP-dependent DNA ligase family. It depends on Mg(2+) as a cofactor. Mn(2+) is required as a cofactor.

The enzyme catalyses ATP + (deoxyribonucleotide)n-3'-hydroxyl + 5'-phospho-(deoxyribonucleotide)m = (deoxyribonucleotide)n+m + AMP + diphosphate.. It catalyses the reaction ADP + (deoxyribonucleotide)n-3'-hydroxyl + 5'-phospho-(deoxyribonucleotide)m = (deoxyribonucleotide)n+m + AMP + phosphate.. The catalysed reaction is GTP + (deoxyribonucleotide)n-3'-hydroxyl + 5'-phospho-(deoxyribonucleotide)m = (deoxyribonucleotide)n+m + GMP + diphosphate.. With respect to regulation, inhibited by Ca(2+) and Zn(2+). Its function is as follows. DNA ligase that seals nicks in double-stranded DNA during DNA replication, DNA recombination and DNA repair. Can use both ATP and ADP. This is DNA ligase from Staphylothermus marinus (strain ATCC 43588 / DSM 3639 / JCM 9404 / F1).